A 210-amino-acid chain; its full sequence is Probable high-affinity nitrate transporter-activating protein 2.2 (210 aa).

Residues 1 to 23 (MARFGAVIHRVFLPLLLLLVVLG) form the signal peptide. The helical transmembrane segment at 182 to 202 (IEVAAGVLSAFSVAALAVFLV) threads the bilayer.

It belongs to the NAR2 family.

It localises to the cell membrane. Involved in nitrate transport. The polypeptide is Probable high-affinity nitrate transporter-activating protein 2.2 (NAR2.2) (Oryza sativa subsp. japonica (Rice)).